The sequence spans 1132 residues: Error-prone DNA polymerase (1132 aa).

The protein belongs to the DNA polymerase type-C family. DnaE2 subfamily.

The protein localises to the cytoplasm. It carries out the reaction DNA(n) + a 2'-deoxyribonucleoside 5'-triphosphate = DNA(n+1) + diphosphate. Its function is as follows. DNA polymerase involved in damage-induced mutagenesis and translesion synthesis (TLS). It is not the major replicative DNA polymerase. The chain is Error-prone DNA polymerase from Anaeromyxobacter dehalogenans (strain 2CP-C).